The chain runs to 314 residues: Ferredoxin:CoB-CoM heterodisulfide reductase subunit B (314 aa).

Belongs to the HdrB family. The ferredoxin:CoB-CoM heterodisulfide reductase is composed of three subunits; HdrA1, HdrB1 and HdrC1. It depends on [4Fe-4S] cluster as a cofactor.

It localises to the cytoplasm. The enzyme catalyses coenzyme B + coenzyme M + 2 oxidized [2Fe-2S]-[ferredoxin] = coenzyme M-coenzyme B heterodisulfide + 2 reduced [2Fe-2S]-[ferredoxin] + 2 H(+). Its pathway is cofactor metabolism; coenzyme M-coenzyme B heterodisulfide reduction; coenzyme B and coenzyme M from coenzyme M-coenzyme B heterodisulfide: step 1/1. Part of a complex that catalyzes the reversible reduction of CoM-S-S-CoB to the thiol-coenzymes H-S-CoM (coenzyme M) and H-S-CoB (coenzyme B). Probably involved in methylotrophic methanogenesis but not in aceticlastic methanogenesis. The chain is Ferredoxin:CoB-CoM heterodisulfide reductase subunit B from Methanosarcina acetivorans (strain ATCC 35395 / DSM 2834 / JCM 12185 / C2A).